A 329-amino-acid polypeptide reads, in one-letter code: Glycerol-3-phosphate dehydrogenase [NAD(P)+] (329 aa).

Residues tryptophan 11, arginine 30, and lysine 103 each contribute to the NADPH site. Residues lysine 103, glycine 132, and serine 134 each coordinate sn-glycerol 3-phosphate. Alanine 136 serves as a coordination point for NADPH. Sn-glycerol 3-phosphate is bound by residues lysine 187, aspartate 240, serine 250, arginine 251, and asparagine 252. Lysine 187 (proton acceptor) is an active-site residue. Position 251 (arginine 251) interacts with NADPH. 2 residues coordinate NADPH: valine 275 and glutamate 277.

The protein belongs to the NAD-dependent glycerol-3-phosphate dehydrogenase family.

The protein localises to the cytoplasm. The catalysed reaction is sn-glycerol 3-phosphate + NAD(+) = dihydroxyacetone phosphate + NADH + H(+). It carries out the reaction sn-glycerol 3-phosphate + NADP(+) = dihydroxyacetone phosphate + NADPH + H(+). It functions in the pathway membrane lipid metabolism; glycerophospholipid metabolism. Catalyzes the reduction of the glycolytic intermediate dihydroxyacetone phosphate (DHAP) to sn-glycerol 3-phosphate (G3P), the key precursor for phospholipid synthesis. The protein is Glycerol-3-phosphate dehydrogenase [NAD(P)+] of Methylobacillus flagellatus (strain ATCC 51484 / DSM 6875 / VKM B-1610 / KT).